The chain runs to 261 residues: Cytochrome c oxidase subunit 3 (261 aa).

The Mitochondrial matrix portion of the chain corresponds to 1–15; the sequence is MTHQTHAYHMVNPSP. The chain crosses the membrane as a helical span at residues 16–34; sequence WPLTGALSALLMTSGLIMW. The Mitochondrial intermembrane segment spans residues 35–40; the sequence is FHFNST. Residues 41–66 traverse the membrane as a helical segment; the sequence is ALLTLGLTTNMLTMYQWWRDVIREST. Topologically, residues 67–72 are mitochondrial matrix; the sequence is FQGHHT. Residues 73–105 form a helical membrane-spanning segment; it reads PAVQKGLRYGMILFIISEVLFFTGFFWAFYHSS. Residues 106-128 are Mitochondrial intermembrane-facing; it reads LAPTPELGGCWPPTGIHPLNPLE. The helical transmembrane segment at 129–152 threads the bilayer; sequence VPLLNTSVLLASGVSITWAHHSLM. Residues 153–155 lie on the Mitochondrial matrix side of the membrane; that stretch reads EGN. A helical transmembrane segment spans residues 156–183; it reads RYHMLQALFITIALGVYFTLLQASEYYE. Residues 184–190 lie on the Mitochondrial intermembrane side of the membrane; sequence APFTISD. A helical membrane pass occupies residues 191 to 223; that stretch reads GVYGSTFFVATGFHGLHVIIGSTFLIVCFFRQL. Over 224–232 the chain is Mitochondrial matrix; that stretch reads KFHFTSSHH. Residues 233–256 form a helical membrane-spanning segment; it reads FGFEAAAWYWHFVDVVWLFLYMSI. Over 257–261 the chain is Mitochondrial intermembrane; the sequence is YWWGS.

This sequence belongs to the cytochrome c oxidase subunit 3 family. Component of the cytochrome c oxidase (complex IV, CIV), a multisubunit enzyme composed of 14 subunits. The complex is composed of a catalytic core of 3 subunits MT-CO1, MT-CO2 and MT-CO3, encoded in the mitochondrial DNA, and 11 supernumerary subunits COX4I, COX5A, COX5B, COX6A, COX6B, COX6C, COX7A, COX7B, COX7C, COX8 and NDUFA4, which are encoded in the nuclear genome. The complex exists as a monomer or a dimer and forms supercomplexes (SCs) in the inner mitochondrial membrane with NADH-ubiquinone oxidoreductase (complex I, CI) and ubiquinol-cytochrome c oxidoreductase (cytochrome b-c1 complex, complex III, CIII), resulting in different assemblies (supercomplex SCI(1)III(2)IV(1) and megacomplex MCI(2)III(2)IV(2)).

The protein resides in the mitochondrion inner membrane. It carries out the reaction 4 Fe(II)-[cytochrome c] + O2 + 8 H(+)(in) = 4 Fe(III)-[cytochrome c] + 2 H2O + 4 H(+)(out). Functionally, component of the cytochrome c oxidase, the last enzyme in the mitochondrial electron transport chain which drives oxidative phosphorylation. The respiratory chain contains 3 multisubunit complexes succinate dehydrogenase (complex II, CII), ubiquinol-cytochrome c oxidoreductase (cytochrome b-c1 complex, complex III, CIII) and cytochrome c oxidase (complex IV, CIV), that cooperate to transfer electrons derived from NADH and succinate to molecular oxygen, creating an electrochemical gradient over the inner membrane that drives transmembrane transport and the ATP synthase. Cytochrome c oxidase is the component of the respiratory chain that catalyzes the reduction of oxygen to water. Electrons originating from reduced cytochrome c in the intermembrane space (IMS) are transferred via the dinuclear copper A center (CU(A)) of subunit 2 and heme A of subunit 1 to the active site in subunit 1, a binuclear center (BNC) formed by heme A3 and copper B (CU(B)). The BNC reduces molecular oxygen to 2 water molecules using 4 electrons from cytochrome c in the IMS and 4 protons from the mitochondrial matrix. In Ovis aries (Sheep), this protein is Cytochrome c oxidase subunit 3 (MT-CO3).